The chain runs to 278 residues: Putative ABC transporter ATP-binding protein MJ1572 (278 aa).

The region spanning 5 to 242 (YRLVDVSYKY…LDELNLDVPE (238 aa)) is the ABC transporter domain. Residue 38 to 45 (GPNGAGKT) participates in ATP binding.

Belongs to the ABC transporter superfamily.

It is found in the cell membrane. Functionally, probably part of an ABC transporter complex. Responsible for energy coupling to the transport system. In Methanocaldococcus jannaschii (strain ATCC 43067 / DSM 2661 / JAL-1 / JCM 10045 / NBRC 100440) (Methanococcus jannaschii), this protein is Putative ABC transporter ATP-binding protein MJ1572.